The sequence spans 349 residues: MQNKIILENMTVDELKEFFVNNGEKPFRALQYFQAIHKNRIFNPDEMTNFSNSLRGKLNQYNDIKNCSIIKRIDSKLDNTKKYLIEMSDGNIVETVFMQYKTHTSICLSTQIGCKMGCKFCASTKKSFVRNLQPYEMCAQIYLVENDLDIRINNIVLMGIGEPLDNYDNVSRFIDLITDKDGQDMSIRNITLSTCGLVDKIIRLANDDIGINITISLHNPFDNERNKLMPIGNKYSIEEILDACDYYFKKTKRRIGFEYTVIENVNDSKKYMDKLVSLLKNRNCLLNLITLNPIEEFNQKSPDRYKMTEFMEYMNKNNVNTTIRRKQGIDIDGACGQLRINNMTKRGVK.

Residue glutamate 94 is the Proton acceptor of the active site. Residues 100 to 324 (YKTHTSICLS…NKNNVNTTIR (225 aa)) enclose the Radical SAM core domain. A disulfide bridge links cysteine 107 with cysteine 335. Positions 114, 118, and 121 each coordinate [4Fe-4S] cluster. S-adenosyl-L-methionine-binding positions include 161-162 (GE), serine 193, 216-218 (SLH), and asparagine 292. Cysteine 335 acts as the S-methylcysteine intermediate in catalysis.

The protein belongs to the radical SAM superfamily. RlmN family. [4Fe-4S] cluster is required as a cofactor.

The protein resides in the cytoplasm. It catalyses the reaction adenosine(2503) in 23S rRNA + 2 reduced [2Fe-2S]-[ferredoxin] + 2 S-adenosyl-L-methionine = 2-methyladenosine(2503) in 23S rRNA + 5'-deoxyadenosine + L-methionine + 2 oxidized [2Fe-2S]-[ferredoxin] + S-adenosyl-L-homocysteine. The catalysed reaction is adenosine(37) in tRNA + 2 reduced [2Fe-2S]-[ferredoxin] + 2 S-adenosyl-L-methionine = 2-methyladenosine(37) in tRNA + 5'-deoxyadenosine + L-methionine + 2 oxidized [2Fe-2S]-[ferredoxin] + S-adenosyl-L-homocysteine. In terms of biological role, specifically methylates position 2 of adenine 2503 in 23S rRNA and position 2 of adenine 37 in tRNAs. This Finegoldia magna (strain ATCC 29328 / DSM 20472 / WAL 2508) (Peptostreptococcus magnus) protein is Probable dual-specificity RNA methyltransferase RlmN.